A 129-amino-acid chain; its full sequence is Small ribosomal subunit protein uS11 (129 aa).

This sequence belongs to the universal ribosomal protein uS11 family. In terms of assembly, part of the 30S ribosomal subunit. Interacts with proteins S7 and S18. Binds to IF-3.

Its function is as follows. Located on the platform of the 30S subunit, it bridges several disparate RNA helices of the 16S rRNA. Forms part of the Shine-Dalgarno cleft in the 70S ribosome. This is Small ribosomal subunit protein uS11 from Parabacteroides distasonis (strain ATCC 8503 / DSM 20701 / CIP 104284 / JCM 5825 / NCTC 11152).